Here is a 42-residue protein sequence, read N- to C-terminus: Bacteriocin bavaricin-MN (42 aa).

Cysteines 10 and 15 form a disulfide.

This sequence belongs to the bacteriocin class IIA/YGNGV family.

The protein localises to the secreted. Has antimicrobial activity. This Latilactobacillus sakei (Lactobacillus sakei) protein is Bacteriocin bavaricin-MN.